A 423-amino-acid chain; its full sequence is Cytidylate cyclase (423 aa).

One can recognise a Guanylate cyclase domain in the interval 79–184 (CSLFVDISGS…LKIRIGIDFG (106 aa)). F82 contacts a ribonucleoside 5'-triphosphate. D84, I85, and D128 together coordinate Mn(2+). An AGS-C domain region spans residues 290-409 (ENEQFYSPRD…ICHDSFGLFI (120 aa)).

It belongs to the adenylyl cyclase class-4/guanylyl cyclase family. Pyrimidine cyclase subfamily. As to quaternary structure, homodimer. Mn(2+) serves as cofactor.

The protein localises to the cytoplasm. It carries out the reaction CTP = 3',5'-cyclic CMP + diphosphate. Pycsar (pyrimidine cyclase system for antiphage resistance) provides immunity against bacteriophage. The pyrimidine cyclase (PycC) synthesizes cyclic nucleotides in response to infection; these serve as specific second messenger signals. The signal activates the adjacent effector, leading to bacterial cell death and abortive phage infection. A clade E Pycsar system. In terms of biological role, the pyrimidine cyclase gene of a two-gene Pycsar system, weakly generates cyclic CMP (cCMP) from CTP, has little to no activity on ATP, GTP or UTP. Expression of this and adjacent effector SaPycTM (AC P0DV39) probably confers resistance to bacteriophage. The genes are probably only expressed in response to bacteriophage infection. This Staphylococcus aureus protein is Cytidylate cyclase.